Consider the following 472-residue polypeptide: Tubulin gamma chain (472 aa).

Residue 142–148 coordinates GTP; sequence AGGTGSG.

This sequence belongs to the tubulin family.

Its subcellular location is the cytoplasm. It localises to the cytoskeleton. It is found in the microtubule organizing center. Its function is as follows. Tubulin is the major constituent of microtubules. The gamma chain is found at microtubule organizing centers (MTOC) such as the spindle poles, suggesting that it is involved in the minus-end nucleation of microtubule assembly. This Anemia phyllitidis (Fern) protein is Tubulin gamma chain (TUBG).